Here is a 173-residue protein sequence, read N- to C-terminus: Alpha-crystallin A chain (173 aa).

Methionine 1 is subject to N-acetylmethionine. The tract at residues 1-63 is required for complex formation with BFSP1 and BFSP2; it reads MDIAIQHPWF…RTVLDSGISE (63 aa). Position 6 is a deamidated glutamine; partial (glutamine 6). Position 45 is a phosphoserine (serine 45). The residue at position 50 (glutamine 50) is a Deamidated glutamine; partial. The sHSP domain occupies 52–162; that stretch reads LFRTVLDSGI…GHSERAIPVS (111 aa). At lysine 70 the chain carries N6-acetyllysine. Position 90 is a deamidated glutamine; partial (glutamine 90). Lysine 99 carries the N6-acetyllysine modification. Histidine 100 is a Zn(2+) binding site. Position 101 is a deamidated asparagine; partial (asparagine 101). Positions 102 and 107 each coordinate Zn(2+). Residue serine 122 is modified to Phosphoserine. At asparagine 123 the chain carries Deamidated asparagine; partial. Residues 144 to 173 are disordered; that stretch reads PKVPSGLDAGHSERAIPVSREEKPSSAPSS. Basic and acidic residues predominate over residues 153–167; sequence GHSERAIPVSREEKP. Histidine 154 lines the Zn(2+) pocket. Serine 162 carries an O-linked (GlcNAc) serine glycan.

Belongs to the small heat shock protein (HSP20) family. In terms of assembly, heteromer composed of three CRYAA and one CRYAB subunits. Inter-subunit bridging via zinc ions enhances stability, which is crucial as there is no protein turn over in the lens. Can also form homodimers and homotetramers (dimers of dimers) which serve as the building blocks of homooligomers. Within homooligomers, the zinc-binding motif is created from residues of 3 different molecules. His-100 and Glu-102 from one molecule are ligands of the zinc ion, and His-107 and His-154 residues from additional molecules complete the site with tetrahedral coordination geometry. Part of a complex required for lens intermediate filament formation composed of BFSP1, BFSP2 and CRYAA. In terms of processing, acetylation at Lys-70 may increase chaperone activity. Post-translationally, undergoes age-dependent proteolytical cleavage at the C-terminus.

It is found in the cytoplasm. The protein localises to the nucleus. Functionally, contributes to the transparency and refractive index of the lens. Acts as a chaperone, preventing aggregation of various proteins under a wide range of stress conditions. Required for the correct formation of lens intermediate filaments as part of a complex composed of BFSP1, BFSP2 and CRYAA. In Tapirus indicus (Asiatic tapir), this protein is Alpha-crystallin A chain (CRYAA).